The primary structure comprises 349 residues: Ion-translocating oxidoreductase complex subunit D (349 aa).

3 helical membrane passes run Cys-36–Ser-56, Ser-77–Val-99, and Ala-124–Ala-144. Thr-185 carries the FMN phosphoryl threonine modification. Helical transmembrane passes span Gly-212–Leu-232, Trp-239–Leu-259, Ala-265–Thr-285, Ala-291–Ile-311, and Gly-315–Ile-335.

It belongs to the NqrB/RnfD family. As to quaternary structure, the complex is composed of six subunits: RnfA, RnfB, RnfC, RnfD, RnfE and RnfG. The cofactor is FMN.

The protein localises to the cell inner membrane. Part of a membrane-bound complex that couples electron transfer with translocation of ions across the membrane. The protein is Ion-translocating oxidoreductase complex subunit D of Shewanella sp. (strain ANA-3).